Reading from the N-terminus, the 62-residue chain is Probable tautomerase RSc0807 (62 aa).

P2 acts as the Proton acceptor; via imino nitrogen in catalysis.

It belongs to the 4-oxalocrotonate tautomerase family.

The sequence is that of Probable tautomerase RSc0807 from Ralstonia nicotianae (strain ATCC BAA-1114 / GMI1000) (Ralstonia solanacearum).